The chain runs to 218 residues: dTTP/UTP pyrophosphatase (218 aa).

Residues 1–10 (MTASPSSAEG) are compositionally biased toward polar residues. The interval 1–20 (MTASPSSAEGSSGLPDRPKL) is disordered. Asp-87 acts as the Proton acceptor in catalysis.

Belongs to the Maf family. YhdE subfamily. Requires a divalent metal cation as cofactor.

The protein localises to the cytoplasm. The catalysed reaction is dTTP + H2O = dTMP + diphosphate + H(+). It carries out the reaction UTP + H2O = UMP + diphosphate + H(+). In terms of biological role, nucleoside triphosphate pyrophosphatase that hydrolyzes dTTP and UTP. May have a dual role in cell division arrest and in preventing the incorporation of modified nucleotides into cellular nucleic acids. The polypeptide is dTTP/UTP pyrophosphatase (Gluconobacter oxydans (strain 621H) (Gluconobacter suboxydans)).